The sequence spans 565 residues: Sulfite reductase [NADPH] hemoprotein beta-component (565 aa).

The [4Fe-4S] cluster site is built by Cys-429, Cys-435, Cys-474, and Cys-478. A siroheme-binding site is contributed by Cys-478.

The protein belongs to the nitrite and sulfite reductase 4Fe-4S domain family. In terms of assembly, alpha(8)-beta(8). The alpha component is a flavoprotein, the beta component is a hemoprotein. The cofactor is siroheme. [4Fe-4S] cluster serves as cofactor.

It carries out the reaction hydrogen sulfide + 3 NADP(+) + 3 H2O = sulfite + 3 NADPH + 4 H(+). It participates in sulfur metabolism; hydrogen sulfide biosynthesis; hydrogen sulfide from sulfite (NADPH route): step 1/1. Its function is as follows. Component of the sulfite reductase complex that catalyzes the 6-electron reduction of sulfite to sulfide. This is one of several activities required for the biosynthesis of L-cysteine from sulfate. In Shewanella oneidensis (strain ATCC 700550 / JCM 31522 / CIP 106686 / LMG 19005 / NCIMB 14063 / MR-1), this protein is Sulfite reductase [NADPH] hemoprotein beta-component.